Here is a 347-residue protein sequence, read N- to C-terminus: Histidinol-phosphate aminotransferase (347 aa).

Lysine 209 carries the N6-(pyridoxal phosphate)lysine modification.

Belongs to the class-II pyridoxal-phosphate-dependent aminotransferase family. Histidinol-phosphate aminotransferase subfamily. Homodimer. Pyridoxal 5'-phosphate serves as cofactor.

The catalysed reaction is L-histidinol phosphate + 2-oxoglutarate = 3-(imidazol-4-yl)-2-oxopropyl phosphate + L-glutamate. The protein operates within amino-acid biosynthesis; L-histidine biosynthesis; L-histidine from 5-phospho-alpha-D-ribose 1-diphosphate: step 7/9. The chain is Histidinol-phosphate aminotransferase from Syntrophotalea carbinolica (strain DSM 2380 / NBRC 103641 / GraBd1) (Pelobacter carbinolicus).